The chain runs to 204 residues: Serotype 3 fimbrial subunit (204 aa).

The first 25 residues, 1–25, serve as a signal peptide directing secretion; that stretch reads MSKFSYPALRAALILAASPVLPALA. C41 and C84 form a disulfide bridge.

Belongs to the fimbrial protein family.

Its subcellular location is the fimbrium. In terms of biological role, bordetella pertussis is the causative agent of whooping cough. An essential step in the disease process is the attachment of the bacteria to the ciliated epithelium of the respiratory tract, enabling the organism to resist normal host-clearance mechanisms. It is unclear which bacterial cell surface component are responsible for adherence but the fimbriae of B.pertussis are prime candidates for being involved in this process. In Bordetella pertussis (strain Tohama I / ATCC BAA-589 / NCTC 13251), this protein is Serotype 3 fimbrial subunit (fim3).